A 417-amino-acid polypeptide reads, in one-letter code: uncharacterized protein (417 aa).

Transmembrane regions (helical) follow at residues 1–21, 32–52, 96–116, 168–188, 192–212, 261–281, 286–306, 351–371, and 392–412; these read MSVL…VLLS, VVGA…VPAG, VLPI…LGIM, LFAI…AGYA, VPLT…LLFA, IAFV…GGWF, LTLQ…IGVT, AIIT…ILIG, and VIAG…FIGL.

The protein belongs to the concentrative nucleoside transporter (CNT) (TC 2.A.41) family.

It is found in the cell inner membrane. This is an uncharacterized protein from Haemophilus influenzae (strain ATCC 51907 / DSM 11121 / KW20 / Rd).